The primary structure comprises 274 residues: Acetyl-coenzyme A carboxylase carboxyl transferase subunit alpha (274 aa).

Residues 2–250 enclose the CoA carboxyltransferase C-terminal domain; the sequence is NKEFIKSIVV…KKELMNAMNE (249 aa).

This sequence belongs to the AccA family. Acetyl-CoA carboxylase is a heterohexamer composed of biotin carboxyl carrier protein (AccB), biotin carboxylase (AccC) and two subunits each of ACCase subunit alpha (AccA) and ACCase subunit beta (AccD).

It localises to the cytoplasm. The enzyme catalyses N(6)-carboxybiotinyl-L-lysyl-[protein] + acetyl-CoA = N(6)-biotinyl-L-lysyl-[protein] + malonyl-CoA. It functions in the pathway lipid metabolism; malonyl-CoA biosynthesis; malonyl-CoA from acetyl-CoA: step 1/1. Component of the acetyl coenzyme A carboxylase (ACC) complex. First, biotin carboxylase catalyzes the carboxylation of biotin on its carrier protein (BCCP) and then the CO(2) group is transferred by the carboxyltransferase to acetyl-CoA to form malonyl-CoA. The sequence is that of Acetyl-coenzyme A carboxylase carboxyl transferase subunit alpha from Clostridium botulinum (strain Eklund 17B / Type B).